A 380-amino-acid polypeptide reads, in one-letter code: tRNA(Met) cytidine acetate ligase (380 aa).

ATP contacts are provided by residues 7–20 (IAEY…HLYQ), glycine 101, asparagine 151, and arginine 176.

This sequence belongs to the TmcAL family.

The protein resides in the cytoplasm. It carries out the reaction cytidine(34) in elongator tRNA(Met) + acetate + ATP = N(4)-acetylcytidine(34) in elongator tRNA(Met) + AMP + diphosphate. Its function is as follows. Catalyzes the formation of N(4)-acetylcytidine (ac(4)C) at the wobble position of elongator tRNA(Met), using acetate and ATP as substrates. First activates an acetate ion to form acetyladenylate (Ac-AMP) and then transfers the acetyl group to tRNA to form ac(4)C34. The chain is tRNA(Met) cytidine acetate ligase from Ligilactobacillus salivarius (strain UCC118) (Lactobacillus salivarius).